The chain runs to 726 residues: Dipeptidyl-peptidase 5 (726 aa).

A signal peptide spans 1 to 19; that stretch reads MAPAKWLIASLAFASTGLA. 2 N-linked (GlcNAc...) asparagine glycosylation sites follow: N96 and N252. The disordered stretch occupies residues 268 to 292; that stretch reads VAEPINKRNGPRTPHGIEGASSSPV. N485 is a glycosylation site (N-linked (GlcNAc...) asparagine). Catalysis depends on S558, which acts as the Charge relay system. An N-linked (GlcNAc...) asparagine glycan is attached at N605. Residues D641 and H673 each act as charge relay system in the active site. A glycan (N-linked (GlcNAc...) asparagine) is linked at N699.

The protein belongs to the peptidase S9C family.

Its subcellular location is the secreted. Extracellular dipeptidyl-peptidase which removes N-terminal dipeptides sequentially from polypeptides having unsubstituted N-termini. Contributes to pathogenicity. This Arthroderma otae (strain ATCC MYA-4605 / CBS 113480) (Microsporum canis) protein is Dipeptidyl-peptidase 5 (DPP5).